A 170-amino-acid chain; its full sequence is UPF0690 protein C1orf52 homolog (170 aa).

Disordered regions lie at residues 1–56 and 124–170; these read MAAE…PDEL and SNVY…KRKV. The span at 46 to 56 shows a compositional bias: basic and acidic residues; the sequence is DTKKLPGPDEL. Acidic residues predominate over residues 144-159; that stretch reads EEEEAREDSPPSDDEQ.

It belongs to the UPF0690 family.

The sequence is that of UPF0690 protein C1orf52 homolog from Xenopus tropicalis (Western clawed frog).